The primary structure comprises 160 residues: Bcl-2-like gene 16 protein (160 aa).

A BH1 motif is present at residues 64–84 (LLTTEHTTNWGKVVAMLSFSA).

It belongs to the Bcl-2 family.

The protein is Bcl-2-like gene 16 protein (16) of Saimiri sciureus (Common squirrel monkey).